Consider the following 118-residue polypeptide: Holo-[acyl-carrier-protein] synthase (118 aa).

Mg(2+) is bound by residues D8 and E58.

It belongs to the P-Pant transferase superfamily. AcpS family. Mg(2+) is required as a cofactor.

The protein localises to the cytoplasm. The enzyme catalyses apo-[ACP] + CoA = holo-[ACP] + adenosine 3',5'-bisphosphate + H(+). Functionally, transfers the 4'-phosphopantetheine moiety from coenzyme A to a Ser of acyl-carrier-protein. The polypeptide is Holo-[acyl-carrier-protein] synthase (Listeria welshimeri serovar 6b (strain ATCC 35897 / DSM 20650 / CCUG 15529 / CIP 8149 / NCTC 11857 / SLCC 5334 / V8)).